We begin with the raw amino-acid sequence, 72 residues long: Small ribosomal subunit protein bS18c (72 aa).

This sequence belongs to the bacterial ribosomal protein bS18 family. As to quaternary structure, part of the 30S ribosomal subunit.

The protein resides in the plastid. It is found in the chloroplast. The sequence is that of Small ribosomal subunit protein bS18c from Emiliania huxleyi (Coccolithophore).